The sequence spans 317 residues: tRNA dimethylallyltransferase (317 aa).

ATP is bound at residue 14–21; it reads GPTAVGKT. Substrate is bound at residue 16-21; that stretch reads TAVGKT. Residues 39–42 are interaction with substrate tRNA; the sequence is DSMQ.

It belongs to the IPP transferase family. As to quaternary structure, monomer. Mg(2+) serves as cofactor.

It carries out the reaction adenosine(37) in tRNA + dimethylallyl diphosphate = N(6)-dimethylallyladenosine(37) in tRNA + diphosphate. Catalyzes the transfer of a dimethylallyl group onto the adenine at position 37 in tRNAs that read codons beginning with uridine, leading to the formation of N6-(dimethylallyl)adenosine (i(6)A). The polypeptide is tRNA dimethylallyltransferase (Bacillus cereus (strain AH187)).